The chain runs to 240 residues: Sugar fermentation stimulation protein homolog (240 aa).

It belongs to the SfsA family.

The chain is Sugar fermentation stimulation protein homolog from Crocosphaera subtropica (strain ATCC 51142 / BH68) (Cyanothece sp. (strain ATCC 51142)).